The sequence spans 130 residues: Small ribosomal subunit protein uS11 (130 aa).

The protein belongs to the universal ribosomal protein uS11 family. In terms of assembly, part of the 30S ribosomal subunit. Interacts with proteins S7 and S18. Binds to IF-3.

Located on the platform of the 30S subunit, it bridges several disparate RNA helices of the 16S rRNA. Forms part of the Shine-Dalgarno cleft in the 70S ribosome. The chain is Small ribosomal subunit protein uS11 from Gluconobacter oxydans (strain 621H) (Gluconobacter suboxydans).